A 160-amino-acid chain; its full sequence is Putative antiporter subunit mnhE2 (160 aa).

3 helical membrane passes run 23–43, 55–75, and 100–120; these read FKFT…YILH, IWVA…SSIS, and SNWA…STVI.

Belongs to the CPA3 antiporters (TC 2.A.63) subunit E family. May form a heterooligomeric complex that consists of seven subunits: mnhA2, mnhB2, mnhC2, mnhD2, mnhE2, mnhF2 and mnhG2.

It localises to the cell membrane. The polypeptide is Putative antiporter subunit mnhE2 (mnhE2) (Staphylococcus epidermidis (strain ATCC 35984 / DSM 28319 / BCRC 17069 / CCUG 31568 / BM 3577 / RP62A)).